The following is a 301-amino-acid chain: Phosphatidylglycerol--prolipoprotein diacylglyceryl transferase (301 aa).

3 consecutive transmembrane segments (helical) span residues 17–37, 59–79, and 97–117; these read LAVRWYGLMYLVAFIAAIVVG, MLFYGVLGTILGGRLGYVLFY, and GGMSFHGGFLGVTLAMVLFAY. An a 1,2-diacyl-sn-glycero-3-phospho-(1'-sn-glycerol)-binding site is contributed by Arg142. Transmembrane regions (helical) follow at residues 230–250 and 265–285; these read MGAISAVFLIGYGLARFTVEF and LSMGQWLSLPMILVGIGLLVW.

The protein belongs to the Lgt family.

Its subcellular location is the cell inner membrane. It carries out the reaction L-cysteinyl-[prolipoprotein] + a 1,2-diacyl-sn-glycero-3-phospho-(1'-sn-glycerol) = an S-1,2-diacyl-sn-glyceryl-L-cysteinyl-[prolipoprotein] + sn-glycerol 1-phosphate + H(+). It functions in the pathway protein modification; lipoprotein biosynthesis (diacylglyceryl transfer). In terms of biological role, catalyzes the transfer of the diacylglyceryl group from phosphatidylglycerol to the sulfhydryl group of the N-terminal cysteine of a prolipoprotein, the first step in the formation of mature lipoproteins. The sequence is that of Phosphatidylglycerol--prolipoprotein diacylglyceryl transferase from Paraburkholderia phytofirmans (strain DSM 17436 / LMG 22146 / PsJN) (Burkholderia phytofirmans).